A 133-amino-acid polypeptide reads, in one-letter code: uncharacterized protein (133 aa).

Residues K82 to Q133 are disordered. The segment covering Y86 to K100 has biased composition (polar residues). A compositionally biased stretch (low complexity) spans Q105 to Q133.

This is an uncharacterized protein from Acidianus convivator (ABV).